The following is a 229-amino-acid chain: Transmembrane protein 217 (229 aa).

Residues 13 to 33 form a helical membrane-spanning segment; sequence MGTVLSGVFTIMAVDMYLIFE. N39 carries N-linked (GlcNAc...) asparagine glycosylation. 3 helical membrane passes run 67–87, 94–114, and 129–149; these read IVLF…YSVY, LVIY…IQIL, and WFGL…VINY. An N-linked (GlcNAc...) asparagine glycan is attached at N156.

It is found in the membrane. This Homo sapiens (Human) protein is Transmembrane protein 217 (TMEM217).